We begin with the raw amino-acid sequence, 148 residues long: Leghemoglobin-1 (148 aa).

In terms of domain architecture, Globin spans 2–146; it reads GFTDKQEALV…LATAIKKAMK (145 aa). A nitrated tyrosine mark is found at tyrosine 24 and tyrosine 29. Heme b is bound at residue serine 44. The residue at position 44 (serine 44) is a Phosphoserine. Histidine 61 lines the O2 pocket. Heme b contacts are provided by histidine 93 and lysine 96. Residue tyrosine 134 is modified to Nitrated tyrosine.

It belongs to the plant globin family. Monomer. Nitrated in effective nodules and particularly in hypoxic conditions; this mechanism may play a protective role in the symbiosis by buffering toxic peroxynitrite NO(2)(-). Nitration level decrease during nodule senescence. Post-translationally, phosphorylation at Ser-44 disrupts the molecular environment of its porphyrin ring oxygen binding pocket, thus leading to a reduced oxygen consumption and to the delivery of oxygen O(2) to symbiosomes. In terms of tissue distribution, root nodules.

It is found in the cytoplasm. The protein localises to the cytosol. Its subcellular location is the nucleus. In terms of biological role, leghemoglobin that reversibly binds oxygen O(2) through a pentacoordinated heme iron. In root nodules, facilitates the diffusion of oxygen to the bacteroids while preventing the bacterial nitrogenase from being inactivated by buffering dioxygen, nitric oxide and carbon monoxide, and promoting the formation of reactive oxygen species (ROS, e.g. H(2)O(2)). This role is essential for symbiotic nitrogen fixation (SNF). This chain is Leghemoglobin-1, found in Pisum sativum (Garden pea).